The following is a 98-amino-acid chain: Cystatin-B (98 aa).

One can recognise a Cystatin domain in the interval 4–83 (GGTSQPVDAD…PCNGETLELS (80 aa)). Residues 46–50 (QCVPG) carry the Secondary area of contact motif.

Belongs to the cystatin family. Ubiquitously expressed in normal and lipopolysaccharide (LPS)-stimulated tissues including brain, eye, gullet, heart, liver, muscle, stomach, kidney, spleen, pyloric ceca, intestine and gill.

The protein resides in the cytoplasm. With respect to regulation, greatly decreased inhibitory activity against papain protease by metal ions including ZnSO(4), CuSO(4), HgCl(2) and CoCl(2). Decreased inhibitory activity against papain protease by detergents including Tween 20, SDS and Brij 35. Functionally, thiol protease inhibitor. Has high papain, bovine cathepsin B and fish cathepsins F and X inhibitory activity and inhibits fish cathepsins L, S and K to a lesser extent in vitro. May be involved in innate immunity. In Paralichthys olivaceus (Bastard halibut), this protein is Cystatin-B.